A 374-amino-acid chain; its full sequence is DNA-directed RNA polymerase subunit alpha (374 aa).

Residues 1 to 270 form an alpha N-terminal domain (alpha-NTD) region; sequence MIFDEDSSSV…DQFQQFINFD (270 aa). Residues 282–374 form an alpha C-terminal domain (alpha-CTD) region; it reads KDVLPYDSNL…ESLSKQYSEE (93 aa).

It belongs to the RNA polymerase alpha chain family. As to quaternary structure, homodimer. The RNAP catalytic core consists of 2 alpha, 1 beta, 1 beta' and 1 omega subunit. When a sigma factor is associated with the core the holoenzyme is formed, which can initiate transcription.

It carries out the reaction RNA(n) + a ribonucleoside 5'-triphosphate = RNA(n+1) + diphosphate. DNA-dependent RNA polymerase catalyzes the transcription of DNA into RNA using the four ribonucleoside triphosphates as substrates. The chain is DNA-directed RNA polymerase subunit alpha from Ehrlichia ruminantium (strain Welgevonden).